Here is a 337-residue protein sequence, read N- to C-terminus: Tetraacyldisaccharide 4'-kinase (337 aa).

Position 51 to 58 (51 to 58) interacts with ATP; that stretch reads HLGGAGKT.

The protein belongs to the LpxK family.

It carries out the reaction a lipid A disaccharide + ATP = a lipid IVA + ADP + H(+). The protein operates within glycolipid biosynthesis; lipid IV(A) biosynthesis; lipid IV(A) from (3R)-3-hydroxytetradecanoyl-[acyl-carrier-protein] and UDP-N-acetyl-alpha-D-glucosamine: step 6/6. In terms of biological role, transfers the gamma-phosphate of ATP to the 4'-position of a tetraacyldisaccharide 1-phosphate intermediate (termed DS-1-P) to form tetraacyldisaccharide 1,4'-bis-phosphate (lipid IVA). This chain is Tetraacyldisaccharide 4'-kinase, found in Nitrobacter winogradskyi (strain ATCC 25391 / DSM 10237 / CIP 104748 / NCIMB 11846 / Nb-255).